We begin with the raw amino-acid sequence, 318 residues long: SPX domain-containing protein 4 (318 aa).

In terms of domain architecture, SPX spans 1-187 (MKFGKEFRTH…GGLLRLPFTQ (187 aa)). Residues 226 to 237 (SAVQAHSSSHQH) show a composition bias toward low complexity. Disordered stretches follow at residues 226 to 247 (SAVQ…AETS) and 284 to 318 (SSLL…GPSH). Basic and acidic residues predominate over residues 305 to 318 (NKDDSEKEDTGPSH).

The chain is SPX domain-containing protein 4 (SPX4) from Arabidopsis thaliana (Mouse-ear cress).